Here is a 397-residue protein sequence, read N- to C-terminus: Succinate--CoA ligase [ADP-forming] subunit beta (397 aa).

The ATP-grasp domain occupies 9–254 (KALLKGYGAP…ETEEDAKEIE (246 aa)). Residues Lys-46, 53-55 (GRG), Glu-109, Ala-112, and Glu-117 contribute to the ATP site. Positions 209 and 223 each coordinate Mg(2+). Residues Asn-274 and 331–333 (GIM) each bind substrate.

Belongs to the succinate/malate CoA ligase beta subunit family. Heterotetramer of two alpha and two beta subunits. Mg(2+) serves as cofactor.

It catalyses the reaction succinate + ATP + CoA = succinyl-CoA + ADP + phosphate. The catalysed reaction is GTP + succinate + CoA = succinyl-CoA + GDP + phosphate. It participates in carbohydrate metabolism; tricarboxylic acid cycle; succinate from succinyl-CoA (ligase route): step 1/1. Succinyl-CoA synthetase functions in the citric acid cycle (TCA), coupling the hydrolysis of succinyl-CoA to the synthesis of either ATP or GTP and thus represents the only step of substrate-level phosphorylation in the TCA. The beta subunit provides nucleotide specificity of the enzyme and binds the substrate succinate, while the binding sites for coenzyme A and phosphate are found in the alpha subunit. This is Succinate--CoA ligase [ADP-forming] subunit beta from Rhizobium etli (strain ATCC 51251 / DSM 11541 / JCM 21823 / NBRC 15573 / CFN 42).